Consider the following 411-residue polypeptide: Z-DNA-binding protein 1 (411 aa).

Z-binding domains are found at residues leucine 8–glycine 70 and serine 84–glutamine 148. Glycyl lysine isopeptide (Lys-Gly) (interchain with G-Cter in ubiquitin) cross-links involve residues lysine 17 and lysine 43. Residues serine 60 to alanine 86 form a disordered region. 2 consecutive short sequence motifs (RIP homotypic interaction motif (RHIM)) follow at residues asparagine 188 to alanine 205 and tyrosine 237 to aspartate 261. Disordered stretches follow at residues glycine 263–threonine 303 and lysine 332–glutamine 411. 3 stretches are compositionally biased toward polar residues: residues tyrosine 268–threonine 292, glycine 350–proline 371, and isoleucine 400–glutamine 411.

As to quaternary structure, homodimer. Interacts (via RIP homotypic interaction motif) with RIPK3; leading to RIPK3 activation and necroptosis; interaction is enhanced by CASP6. Interacts (via RIP homotypic interaction motif) with RIPK1. Component of the AIM2 PANoptosome complex, a multiprotein complex that drives inflammatory cell death (PANoptosis). (Microbial infection) Interacts (via RIP homotypic interaction motif) with murid herpesvirus protein RIR1 (via RIP homotypic interaction motif); leading to inhibition of ZBP1-dependent necroptosis. In terms of assembly, (Microbial infection) Interacts with vaccinia virus E3 protein; leading to inhibit ZBP1-dependent necroptosis. Ubiquitinated; polyubiquitinated following influenza A virus (IAV) infection. In terms of processing, phosphorylated. Expressed in lung, spleen and liver. Lower levels were seen in heart, kidney and testis. Expression is greatly up-regulated in tumor stromal cells and activated macrophages.

The protein localises to the cytoplasm. It is found in the nucleus. With respect to regulation, ZBP1-dependent necroptosis is normally inhibited by RIPK1: RIPK1 inhibits the ZBP1-induced activation of RIPK3 via FADD-mediated recruitment of CASP8, which cleaves RIPK1 and limits TNF-induced necroptosis. Functionally, key innate sensor that recognizes and binds Z-RNA structures, which are produced by a number of viruses, such as herpesvirus, orthomyxovirus or flavivirus, and triggers different forms of cell death. ZBP1 acts as an essential mediator of pyroptosis, necroptosis and apoptosis (PANoptosis), an integral part of host defense against pathogens, by activating RIPK3, caspase-8 (CASP8), and the NLRP3 inflammasome. Key activator of necroptosis, a programmed cell death process in response to death-inducing TNF-alpha family members, via its ability to bind Z-RNA: once activated upon Z-RNA-binding, ZBP1 interacts and stimulates RIPK3 kinase, which phosphorylates and activates MLKL, triggering execution of programmed necrosis. In addition to TNF-induced necroptosis, necroptosis can also take place in the nucleus in response to orthomyxoviruses infection: ZBP1 recognizes and binds Z-RNA structures that are produced in infected nuclei by orthomyxoviruses, such as the influenza A virus (IAV), leading to ZBP1 activation, RIPK3 stimulation and subsequent MLKL phosphorylation, triggering disruption of the nuclear envelope and leakage of cellular DNA into the cytosol. ZBP1-dependent cell death in response to IAV infection promotes interleukin-1 alpha (IL1A) induction in an NLRP3-inflammasome-independent manner: IL1A expression is required for the optimal interleukin-1 beta (IL1B) production, and together, these cytokines promote infiltration of inflammatory neutrophils to the lung, leading to the formation of neutrophil extracellular traps. In addition to its direct role in driving necroptosis via its ability to sense Z-RNAs, also involved in PANoptosis triggered in response to bacterial infection: component of the AIM2 PANoptosome complex, a multiprotein complex that triggers PANoptosis. Also acts as the apical sensor of fungal infection responsible for activating PANoptosis. Involved in CASP8-mediated cell death via its interaction with RIPK1 but independently of its ability to sense Z-RNAs. In some cell types, also able to restrict viral replication by promoting cell death-independent responses. In response to flavivirus infection in neurons, promotes a cell death-independent pathway that restricts viral replication: together with RIPK3, promotes a death-independent transcriptional program that modifies the cellular metabolism via up-regulation expression of the enzyme ACOD1/IRG1 and production of the metabolite itaconate. Itaconate inhibits the activity of succinate dehydrogenase, generating a metabolic state in neurons that suppresses replication of viral genomes. In Mus musculus (Mouse), this protein is Z-DNA-binding protein 1.